The chain runs to 165 residues: Ubiquitin-like protein ISG15 (165 aa).

Ubiquitin-like domains lie at 2–78 (GWDL…VDKC) and 79–157 (DEPL…LRGG). Cysteine 78 carries the S-nitrosocysteine; alternate modification. An LRLRGG motif is present at residues 152–157 (LRLRGG). Positions 153-157 (RLRGG) are involved in the ligation of specific target proteins. Glycine 157 participates in a covalent cross-link: Glycyl lysine isopeptide (Gly-Lys) (interchain with K-? in acceptor proteins). The propeptide at 158 to 165 (GTEPGGRS) is removed in mature form.

As to quaternary structure, homodimer; disulfide-linked. Interacts with, and is conjugated to its targets by UBE1L (E1 enzyme) and UBE2E2 (E2 enzyme). Interacts with NEDD4. Interacts with PARP12; this interaction inhibits PINK1/Parkin-dependent mitophagy. In terms of assembly, (Microbial infection) Interacts with vaccinia virus protein E3. (Microbial infection) Interaction with influenza B NS1 protein inhibits its conjugation. As to quaternary structure, (Microbial infection) Interacts (via C-terminus) with Crimean-Congo hemorrhagic fever virus (CCHFV) RNA-directed RNA polymerase L (via N-terminus); the deISGylase activity of the viral protein interferes with antiviral signaling pathways mediated by NF-kappaB and IRF signalings. In terms of assembly, (Microbial infection) Interacts with human cytomegalovirus protein UL26; this interaction inhibits global protein ISGylation. S-nitrosylation decreases its dimerization, thereby increasing the availability as well as the solubility of monomeric ISG15 for its conjugation to cellular proteins. Post-translationally, induced as an inactive, precursor protein that is cleaved by specific proteases to expose the C-terminal diglycine (LRLRGG) motif. This motif is essential not only for its conjugation to substrates but also for its recognition by the relevant processing proteases. As to expression, detected in lymphoid cells, striated and smooth muscle, several epithelia and neurons. Expressed in neutrophils, monocytes and lymphocytes. Enhanced expression seen in pancreatic adenocarcinoma, endometrial cancer, and bladder cancer, as compared to non-cancerous tissue. In bladder cancer, the increase in expression exhibits a striking positive correlation with more advanced stages of the disease.

It is found in the cytoplasm. The protein resides in the secreted. Its function is as follows. Ubiquitin-like protein which plays a key role in the innate immune response to viral infection either via its conjugation to a target protein (ISGylation) or via its action as a free or unconjugated protein. ISGylation involves a cascade of enzymatic reactions involving E1, E2, and E3 enzymes which catalyze the conjugation of ISG15 to a lysine residue in the target protein. Its target proteins include IFIT1, MX1/MxA, PPM1B, UBE2L6, UBA7, CHMP5, CHMP2A, CHMP4B and CHMP6. Isgylation of the viral sensor IFIH1/MDA5 promotes IFIH1/MDA5 oligomerization and triggers activation of innate immunity against a range of viruses, including coronaviruses, flaviviruses and picornaviruses. Can also isgylate: EIF2AK2/PKR which results in its activation, RIGI which inhibits its function in antiviral signaling response, EIF4E2 which enhances its cap structure-binding activity and translation-inhibition activity, UBE2N and UBE2E1 which negatively regulates their activity, IRF3 which inhibits its ubiquitination and degradation and FLNB which prevents its ability to interact with the upstream activators of the JNK cascade thereby inhibiting IFNA-induced JNK signaling. Exhibits antiviral activity towards both DNA and RNA viruses, including influenza A, HIV-1 and Ebola virus. Restricts HIV-1 and ebola virus via disruption of viral budding. Inhibits the ubiquitination of HIV-1 Gag and host TSG101 and disrupts their interaction, thereby preventing assembly and release of virions from infected cells. Inhibits Ebola virus budding mediated by the VP40 protein by disrupting ubiquitin ligase activity of NEDD4 and its ability to ubiquitinate VP40. ISGylates influenza A virus NS1 protein which causes a loss of function of the protein and the inhibition of virus replication. The secreted form of ISG15 can: induce natural killer cell proliferation, act as a chemotactic factor for neutrophils and act as a IFN-gamma-inducing cytokine playing an essential role in antimycobacterial immunity. The secreted form acts through the integrin ITGAL/ITGB2 receptor to initiate activation of SRC family tyrosine kinases including LYN, HCK and FGR which leads to secretion of IFNG and IL10; the interaction is mediated by ITGAL. In Homo sapiens (Human), this protein is Ubiquitin-like protein ISG15.